The sequence spans 303 residues: Mycothiol acetyltransferase (303 aa).

2 N-acetyltransferase domains span residues 6 to 134 (TSLA…VEGD) and 154 to 303 (NEAY…QSSS). E37 provides a ligand contact to 1D-myo-inositol 2-(L-cysteinylamino)-2-deoxy-alpha-D-glucopyranoside. Residues 75–77 (VVV) and 83–88 (RQGYGS) contribute to the acetyl-CoA site. Residues E180, K221, and E233 each coordinate 1D-myo-inositol 2-(L-cysteinylamino)-2-deoxy-alpha-D-glucopyranoside. Residues 237 to 239 (VGL) and 244 to 250 (RRRGLGD) contribute to the acetyl-CoA site. Y271 contributes to the 1D-myo-inositol 2-(L-cysteinylamino)-2-deoxy-alpha-D-glucopyranoside binding site. 276-281 (NESARR) is a binding site for acetyl-CoA.

This sequence belongs to the acetyltransferase family. MshD subfamily. As to quaternary structure, monomer.

It carries out the reaction 1D-myo-inositol 2-(L-cysteinylamino)-2-deoxy-alpha-D-glucopyranoside + acetyl-CoA = mycothiol + CoA + H(+). In terms of biological role, catalyzes the transfer of acetyl from acetyl-CoA to desacetylmycothiol (Cys-GlcN-Ins) to form mycothiol. In Corynebacterium diphtheriae (strain ATCC 700971 / NCTC 13129 / Biotype gravis), this protein is Mycothiol acetyltransferase.